The chain runs to 354 residues: Photosystem II protein D1 (354 aa).

T2 is modified (N-acetylthreonine). T2 carries the phosphothreonine modification. A run of 3 helical transmembrane segments spans residues 29 to 46 (YIGW…TATS), 118 to 133 (HFLL…EWEL), and 142 to 156 (WIAV…AATA). H118 contacts chlorophyll a. Y126 serves as a coordination point for pheophytin a. D170 and E189 together coordinate [CaMn4O5] cluster. Residues 197–218 (FHMLGVAGVFGGSLFSAMHGSL) traverse the membrane as a helical segment. Residue H198 participates in chlorophyll a binding. A quinone is bound by residues H215 and 264-265 (SF). A Fe cation-binding site is contributed by H215. H272 serves as a coordination point for Fe cation. A helical transmembrane segment spans residues 274–288 (FLAAWPVVGIWFTAL). [CaMn4O5] cluster contacts are provided by H332, E333, D342, and A344. Positions 345-354 (ASIEAPSLNG) are excised as a propeptide.

This sequence belongs to the reaction center PufL/M/PsbA/D family. PSII is composed of 1 copy each of membrane proteins PsbA, PsbB, PsbC, PsbD, PsbE, PsbF, PsbH, PsbI, PsbJ, PsbK, PsbL, PsbM, PsbT, PsbX, PsbY, PsbZ, Psb30/Ycf12, at least 3 peripheral proteins of the oxygen-evolving complex and a large number of cofactors. It forms dimeric complexes. It depends on The D1/D2 heterodimer binds P680, chlorophylls that are the primary electron donor of PSII, and subsequent electron acceptors. It shares a non-heme iron and each subunit binds pheophytin, quinone, additional chlorophylls, carotenoids and lipids. D1 provides most of the ligands for the Mn4-Ca-O5 cluster of the oxygen-evolving complex (OEC). There is also a Cl(-1) ion associated with D1 and D2, which is required for oxygen evolution. The PSII complex binds additional chlorophylls, carotenoids and specific lipids. as a cofactor. In terms of processing, tyr-161 forms a radical intermediate that is referred to as redox-active TyrZ, YZ or Y-Z. Post-translationally, C-terminally processed by CTPA; processing is essential to allow assembly of the oxygen-evolving complex and thus photosynthetic growth.

It is found in the plastid. Its subcellular location is the chloroplast thylakoid membrane. It catalyses the reaction 2 a plastoquinone + 4 hnu + 2 H2O = 2 a plastoquinol + O2. Its function is as follows. Photosystem II (PSII) is a light-driven water:plastoquinone oxidoreductase that uses light energy to abstract electrons from H(2)O, generating O(2) and a proton gradient subsequently used for ATP formation. It consists of a core antenna complex that captures photons, and an electron transfer chain that converts photonic excitation into a charge separation. The D1/D2 (PsbA/PsbD) reaction center heterodimer binds P680, the primary electron donor of PSII as well as several subsequent electron acceptors. The chain is Photosystem II protein D1 from Selaginella uncinata (Blue spike-moss).